Reading from the N-terminus, the 223-residue chain is Ribonuclease T (223 aa).

The region spanning 20–194 (VVIDVETAGF…YDTEQTALLF (175 aa)) is the Exonuclease domain. Positions 23, 25, 181, and 186 each coordinate Mg(2+). Residue His-181 is the Proton donor/acceptor of the active site.

Belongs to the RNase T family. As to quaternary structure, homodimer. Mg(2+) is required as a cofactor.

Trims short 3' overhangs of a variety of RNA species, leaving a one or two nucleotide 3' overhang. Responsible for the end-turnover of tRNA: specifically removes the terminal AMP residue from uncharged tRNA (tRNA-C-C-A). Also appears to be involved in tRNA biosynthesis. The protein is Ribonuclease T of Cronobacter sakazakii (strain ATCC BAA-894) (Enterobacter sakazakii).